A 498-amino-acid chain; its full sequence is Lysine--tRNA ligase (498 aa).

2 residues coordinate Mg(2+): Glu408 and Glu415.

Belongs to the class-II aminoacyl-tRNA synthetase family. Homodimer. It depends on Mg(2+) as a cofactor.

The protein resides in the cytoplasm. The enzyme catalyses tRNA(Lys) + L-lysine + ATP = L-lysyl-tRNA(Lys) + AMP + diphosphate. This is Lysine--tRNA ligase from Pediococcus pentosaceus (strain ATCC 25745 / CCUG 21536 / LMG 10740 / 183-1w).